The primary structure comprises 255 residues: MWIGIISLFPEMFRAITDYGVTGRAVKNGLLSIESWSPRDFAHDRHRTVDDRPYGGGPGMLMMVQPLRDAIHAAKAAAGEGAKVIYLSPQGRKLDQAGVSELATNQKLILVCGRYEGIDERVIQTEIDEEWSIGDYVLSGGELPAMTLIDSVSRFIPGVLGHEASATEDSFADGLLDCPHYTRPEVLEEMEVPPVLLSGNHAEIRRWRLKQSLGRTWLRRPELLENLALTEEQAKLLAQFKSEHAQQQHKHDGQA.

S-adenosyl-L-methionine-binding positions include Gly113 and Ile133–Leu138.

Belongs to the RNA methyltransferase TrmD family. In terms of assembly, homodimer.

Its subcellular location is the cytoplasm. The catalysed reaction is guanosine(37) in tRNA + S-adenosyl-L-methionine = N(1)-methylguanosine(37) in tRNA + S-adenosyl-L-homocysteine + H(+). In terms of biological role, specifically methylates guanosine-37 in various tRNAs. This chain is tRNA (guanine-N(1)-)-methyltransferase, found in Klebsiella pneumoniae (strain 342).